Consider the following 119-residue polypeptide: UPF0145 protein Ta0182 (119 aa).

The protein belongs to the UPF0145 family.

This is UPF0145 protein Ta0182 from Thermoplasma acidophilum (strain ATCC 25905 / DSM 1728 / JCM 9062 / NBRC 15155 / AMRC-C165).